The sequence spans 759 residues: Subtilisin-like protease SBT3.10 (759 aa).

Positions 1–25 (MSKTIILLAFFLSIVLNVQISFVVA) are cleaved as a signal peptide. Positions 26 to 108 (ESKVYVVYLG…VIPNTLYEMT (83 aa)) are cleaved as a propeptide — activation peptide. The Inhibitor I9 domain occupies 29-106 (VYVVYLGEKE…VQVIPNTLYE (78 aa)). In terms of domain architecture, Peptidase S8 spans 112–606 (TWDYLGVSPG…GGLINPEKAV (495 aa)). The Charge relay system role is filled by D142. N-linked (GlcNAc...) asparagine glycans are attached at residues N175 and N202. H218 acts as the Charge relay system in catalysis. Residues N233 and N361 are each glycosylated (N-linked (GlcNAc...) asparagine). One can recognise a PA domain in the interval 390–464 (DCEKLSANPK…ELGTDILFYI (75 aa)). S537 serves as the catalytic Charge relay system.

The protein belongs to the peptidase S8 family.

It localises to the secreted. In Arabidopsis thaliana (Mouse-ear cress), this protein is Subtilisin-like protease SBT3.10.